Reading from the N-terminus, the 336-residue chain is Cytoplasmic envelopment protein 2 (336 aa).

Belongs to the herpesviridae cytoplasmic envelopment protein 2 family. Interacts with cytoplasmic envelopment protein 3 and with the capsid.

Its subcellular location is the virion tegument. The protein resides in the host cytoplasm. It localises to the host nucleus. Functionally, plays a critical role in cytoplasmic virus egress. Participates in the final step of tegumentation and envelope acquisition within the host cytoplasm by directly interacting with the capsid. Upon virion binding to target cell, a signaling cascade is triggered to disrupt the interaction with the capsid, thereby preparing capsid uncoating. This Elephantid herpesvirus 1 (isolate Asian elephant/Berlin/Kiba/1998) (EIHV-1) protein is Cytoplasmic envelopment protein 2.